The chain runs to 274 residues: 2-dehydro-3-deoxyphosphooctonate aldolase (274 aa).

It belongs to the KdsA family.

Its subcellular location is the cytoplasm. The catalysed reaction is D-arabinose 5-phosphate + phosphoenolpyruvate + H2O = 3-deoxy-alpha-D-manno-2-octulosonate-8-phosphate + phosphate. It participates in carbohydrate biosynthesis; 3-deoxy-D-manno-octulosonate biosynthesis; 3-deoxy-D-manno-octulosonate from D-ribulose 5-phosphate: step 2/3. The protein operates within bacterial outer membrane biogenesis; lipopolysaccharide biosynthesis. The protein is 2-dehydro-3-deoxyphosphooctonate aldolase of Rickettsia rickettsii (strain Iowa).